Reading from the N-terminus, the 375-residue chain is Succinyl-diaminopimelate desuccinylase (375 aa).

His-66 contacts Zn(2+). The active site involves Asp-68. Asp-99 lines the Zn(2+) pocket. Glu-133 (proton acceptor) is an active-site residue. Zn(2+) contacts are provided by Glu-134, Glu-162, and His-348.

The protein belongs to the peptidase M20A family. DapE subfamily. In terms of assembly, homodimer. Requires Zn(2+) as cofactor. Co(2+) is required as a cofactor.

The enzyme catalyses N-succinyl-(2S,6S)-2,6-diaminopimelate + H2O = (2S,6S)-2,6-diaminopimelate + succinate. It participates in amino-acid biosynthesis; L-lysine biosynthesis via DAP pathway; LL-2,6-diaminopimelate from (S)-tetrahydrodipicolinate (succinylase route): step 3/3. Its function is as follows. Catalyzes the hydrolysis of N-succinyl-L,L-diaminopimelic acid (SDAP), forming succinate and LL-2,6-diaminopimelate (DAP), an intermediate involved in the bacterial biosynthesis of lysine and meso-diaminopimelic acid, an essential component of bacterial cell walls. The polypeptide is Succinyl-diaminopimelate desuccinylase (Yersinia enterocolitica serotype O:8 / biotype 1B (strain NCTC 13174 / 8081)).